A 268-amino-acid chain; its full sequence is Proenkephalin-A (268 aa).

A signal peptide spans 1–24 (MARFLRLCTWLLALGSCLLATVQA). 3 disulfide bridges follow: Cys26-Cys48, Cys30-Cys52, and Cys33-Cys65. The interval 163-184 (TGDNRAKDSHQQESTNNDEDMS) is disordered. Propeptides lie at residues 197-208 (SPQLEDEAKELQ) and 218-228 (VGRPEWWMDYQ). A Phosphoserine modification is found at Ser252.

This sequence belongs to the opioid neuropeptide precursor family. Proenkephalin-A is cleaved by CTSL to generate Met-enkephalin. Post-translationally, processed and degraded by ACE. In terms of processing, probably cleaved by ACE. Processed by ACE to generate Met-enkephalin in the nucleus accumbens of the brain. Post-translationally, the N-terminal domain contains 6 conserved cysteines thought to be involved in disulfide bonding and/or processing. In terms of tissue distribution, spermatogenic and somatic cells.

It localises to the cytoplasmic vesicle. Its subcellular location is the secretory vesicle. The protein localises to the chromaffin granule lumen. It is found in the secreted. Neuropeptide that competes with and mimic the effects of opiate drugs. They play a role in a number of physiologic functions, including pain perception and responses to stress. Its function is as follows. Met-enkephalin-Arg-Phe neuropeptide acts as a strong ligand of Mu-type opioid receptor OPRM1. Met-enkephalin-Arg-Phe-binding to OPRM1 in the nucleus accumbens of the brain increases activation of OPRM1, leading to long-term synaptic depression of glutamate release. In terms of biological role, increases glutamate release in the striatum and decreases GABA concentration in the striatum. Functionally, increases glutamate release in the striatum. In Mus musculus (Mouse), this protein is Proenkephalin-A (Penk).